Reading from the N-terminus, the 174-residue chain is Centrosomal protein 20 (174 aa).

Residues 1–104 are necessary and sufficient for homooligomerization and localization to centrosomes and pericentriolar satellites; the sequence is MATVTELKAV…AFEESKDNSI (104 aa). Residues 49–81 enclose the LisH domain; the sequence is ENLLINELIREYLEFNKYKYTASVLIAESGQPV. Residues 136-174 are disordered; that stretch reads TKHLSWKPSRRPDDDHVRKDTGPRTTTEELPAAAQAVSR. Ser144 carries the phosphoserine modification. The segment covering 145 to 157 has biased composition (basic and acidic residues); sequence RRPDDDHVRKDTG.

This sequence belongs to the CEP43 family. As to quaternary structure, homooligomer; probably required for localization to centrosomes. Forms a complex with KIAA0753/OFIP and OFD1; within this complex may stabilize the interaction between OFD1 and KIAA0753/OFIP. Interacts with PCM1; this interaction may be mediated by KIAA0753/OFIP.

The protein localises to the cytoplasm. The protein resides in the cytoskeleton. It is found in the microtubule organizing center. Its subcellular location is the centrosome. It localises to the centriole. The protein localises to the cell projection. The protein resides in the cilium. It is found in the cilium basal body. Its subcellular location is the cytoplasmic granule. It localises to the centriolar satellite. Involved in the biogenesis of cilia. Required for the recruitment of PLK1 to centrosomes and S phase progression. The sequence is that of Centrosomal protein 20 from Mus musculus (Mouse).